The chain runs to 306 residues: C-type lectin domain family 10 member A (306 aa).

The Cytoplasmic portion of the chain corresponds to 1–37 (MTMAYENFQNLGSEEKNQEAGKAPPQSFLCNILSWTH). The helical; Signal-anchor for type II membrane protein transmembrane segment at 38-58 (LLLFSLGLSLLLLVVISVIGS) threads the bilayer. Over 59–306 (QNSQLRRDLE…VCEMKLAKDS (248 aa)) the chain is Extracellular. 2 N-linked (GlcNAc...) asparagine glycosylation sites follow: Asn-76 and Asn-168. The region spanning 174–300 (CCPLHWMEHE…QRPYRWVCEM (127 aa)) is the C-type lectin domain. 3 cysteine pairs are disulfide-bonded: Cys-175–Cys-186, Cys-203–Cys-298, and Cys-276–Cys-290.

Homooligomer.

The protein localises to the membrane. Functionally, recognizes terminal galactose and N-acetylgalactosamine units. The sequence is that of C-type lectin domain family 10 member A (Clec10a) from Rattus norvegicus (Rat).